We begin with the raw amino-acid sequence, 189 residues long: Glycerol-3-phosphate acyltransferase 1 (189 aa).

Transmembrane regions (helical) follow at residues 12–32 (MQFL…AYIV), 61–81 (GYFV…VSIA), 88–108 (FTFV…PMLF), 124–144 (IAFD…FYLI), and 164–184 (ILYS…VLIL).

It belongs to the PlsY family. Probably interacts with PlsX.

The protein resides in the cell membrane. It carries out the reaction an acyl phosphate + sn-glycerol 3-phosphate = a 1-acyl-sn-glycero-3-phosphate + phosphate. The protein operates within lipid metabolism; phospholipid metabolism. Its function is as follows. Catalyzes the transfer of an acyl group from acyl-phosphate (acyl-PO(4)) to glycerol-3-phosphate (G3P) to form lysophosphatidic acid (LPA). This enzyme utilizes acyl-phosphate as fatty acyl donor, but not acyl-CoA or acyl-ACP. In Bacillus anthracis, this protein is Glycerol-3-phosphate acyltransferase 1.